Here is a 411-residue protein sequence, read N- to C-terminus: Exodeoxyribonuclease 7 large subunit (411 aa).

It belongs to the XseA family. As to quaternary structure, heterooligomer composed of large and small subunits.

The protein resides in the cytoplasm. The catalysed reaction is Exonucleolytic cleavage in either 5'- to 3'- or 3'- to 5'-direction to yield nucleoside 5'-phosphates.. Its function is as follows. Bidirectionally degrades single-stranded DNA into large acid-insoluble oligonucleotides, which are then degraded further into small acid-soluble oligonucleotides. In Mycobacterium sp. (strain JLS), this protein is Exodeoxyribonuclease 7 large subunit.